Consider the following 110-residue polypeptide: Integration host factor subunit alpha (110 aa).

Belongs to the bacterial histone-like protein family. As to quaternary structure, heterodimer of an alpha and a beta chain.

This protein is one of the two subunits of integration host factor, a specific DNA-binding protein that functions in genetic recombination as well as in transcriptional and translational control. In Nitrobacter hamburgensis (strain DSM 10229 / NCIMB 13809 / X14), this protein is Integration host factor subunit alpha.